The following is a 121-amino-acid chain: Large ribosomal subunit protein uL18 (121 aa).

Belongs to the universal ribosomal protein uL18 family. As to quaternary structure, part of the 50S ribosomal subunit; part of the 5S rRNA/L5/L18/L25 subcomplex. Contacts the 5S and 23S rRNAs.

Functionally, this is one of the proteins that bind and probably mediate the attachment of the 5S RNA into the large ribosomal subunit, where it forms part of the central protuberance. This Bdellovibrio bacteriovorus (strain ATCC 15356 / DSM 50701 / NCIMB 9529 / HD100) protein is Large ribosomal subunit protein uL18.